The chain runs to 399 residues: Cyclic dehypoxanthine futalosine synthase (399 aa).

In terms of domain architecture, Radical SAM core spans 56 to 288; the sequence is ATYIIERNIN…IAIARVFLDN (233 aa). [4Fe-4S] cluster-binding residues include cysteine 70, cysteine 74, and cysteine 77.

It belongs to the radical SAM superfamily. MqnC family. The cofactor is [4Fe-4S] cluster.

It carries out the reaction dehypoxanthine futalosine + S-adenosyl-L-methionine = cyclic dehypoxanthinylfutalosinate + 5'-deoxyadenosine + L-methionine + H(+). It participates in quinol/quinone metabolism; menaquinone biosynthesis. Functionally, radical SAM enzyme that catalyzes the cyclization of dehypoxanthine futalosine (DHFL) into cyclic dehypoxanthine futalosine (CDHFL), a step in the biosynthesis of menaquinone (MK, vitamin K2). This is Cyclic dehypoxanthine futalosine synthase from Streptomyces coelicolor (strain ATCC BAA-471 / A3(2) / M145).